Reading from the N-terminus, the 503-residue chain is WAS/WASL-interacting protein family member 1 (503 aa).

Positions 1 to 14 (MPVPPPPAPPPPPT) are enriched in pro residues. The interval 1–503 (MPVPPPPAPP…GAPPLPPIPR (503 aa)) is disordered. Residues 21–31 (EKPTLNKTEQA) are compositionally biased toward polar residues. Residues 32 to 49 (GRNALLSDISKGKKLKKT) enclose the WH2 domain. Arginine 33 carries the asymmetric dimethylarginine modification. Positions 45-48 (KLKK) are binds actin. The segment covering 65–104 (AGAGGGGGGFGGGGGFGGGGGGGGGGSFGGGGPPGLGGLF) has biased composition (gly residues). A compositionally biased stretch (low complexity) spans 121–137 (SGGSRPPLLPPGGRSTS). 2 positions are modified to omega-N-methylarginine: arginine 125 and arginine 134. Pro residues-rich tracts occupy residues 141-154 (FSPPSGPGRFPVPS), 161-174 (PPEPQRNRMPPPRP), 182-191 (SIPPPVPSTP), and 204-223 (PPVPGGPRQPSPGPTPPPFP). Phosphoserine is present on serine 142. A Phosphoserine modification is found at serine 234. The span at 238–247 (SPLSSSSPFS) shows a compositional bias: low complexity. Pro residues-rich tracts occupy residues 282–298 (VPPPPPQNNKPPVPSTP) and 306–323 (APPPPPPPSRPGPPPLPP). Serine 340 carries the post-translational modification Phosphoserine. Position 345 is a phosphothreonine (threonine 345). Residues 346–371 (PPLPSPGRSGPLPPPPSERPPPPVRD) show a composition bias toward pro residues. Serine 350 carries the post-translational modification Phosphoserine. XRSGPXPPXP motif repeat units follow at residues 352 to 361 (GRSGPLPPPP), 374 to 383 (GRSGPLPPPP), and 410 to 419 (PRSGPRPPLP). Positions 413–434 (GPRPPLPPDRPSAGAPPPPPPS) are enriched in pro residues. A compositionally biased stretch (basic and acidic residues) spans 480–494 (ARNESRSGSNRRERG).

It belongs to the verprolin family. In terms of assembly, binds to WAS, profilin and actin. Binds to WASL. Interacts with DBNL. Interacts with FNBP1L (via the SH3 domain). Highly expressed in peripheral blood mononuclear cells, spleen, placenta, small intestine, colon and thymus. Lower expression in ovary, heart, brain, lung, liver, skeletal muscle, kidney, pancreas, prostate and testis.

The protein localises to the cytoplasmic vesicle. Its subcellular location is the cytoplasm. The protein resides in the cytoskeleton. It localises to the cell projection. It is found in the ruffle. In terms of biological role, plays a role in the reorganization of the actin cytoskeleton. Contributes with NCK1 and GRB2 in the recruitment and activation of WASL. May participate in regulating the subcellular localization of WASL, resulting in the disassembly of stress fibers in favor of filopodia formation. Plays a role in the formation of cell ruffles. Plays an important role in the intracellular motility of vaccinia virus by functioning as an adapter for recruiting WASL to vaccinia virus. This chain is WAS/WASL-interacting protein family member 1 (WIPF1), found in Homo sapiens (Human).